A 367-amino-acid chain; its full sequence is NADH-quinone oxidoreductase subunit H (367 aa).

A run of 8 helical transmembrane segments spans residues 18–38 (VLLF…VAYL), 87–107 (LCFL…WAVI), 132–152 (IGVL…IIAG), 180–200 (LTIV…IVIA), 204–224 (MPYW…ISAL), 257–277 (FFLG…IFFF), 291–311 (IIPG…CFIW), and 328–348 (GWKV…GILV).

This sequence belongs to the complex I subunit 1 family. NDH-1 is composed of 14 different subunits. Subunits NuoA, H, J, K, L, M, N constitute the membrane sector of the complex.

The protein localises to the cell inner membrane. It catalyses the reaction a quinone + NADH + 5 H(+)(in) = a quinol + NAD(+) + 4 H(+)(out). Its function is as follows. NDH-1 shuttles electrons from NADH, via FMN and iron-sulfur (Fe-S) centers, to quinones in the respiratory chain. The immediate electron acceptor for the enzyme in this species is believed to be ubiquinone. Couples the redox reaction to proton translocation (for every two electrons transferred, four hydrogen ions are translocated across the cytoplasmic membrane), and thus conserves the redox energy in a proton gradient. This subunit may bind ubiquinone. The protein is NADH-quinone oxidoreductase subunit H of Ehrlichia ruminantium (strain Gardel).